We begin with the raw amino-acid sequence, 359 residues long: DNA-directed RNA polymerase subunit alpha (359 aa).

Positions M1–N226 are alpha N-terminal domain (alpha-NTD). Residues A241–L359 form an alpha C-terminal domain (alpha-CTD) region. The segment at F315–L359 is disordered. The segment covering N345–L359 has biased composition (acidic residues).

It belongs to the RNA polymerase alpha chain family. As to quaternary structure, homodimer. The RNAP catalytic core consists of 2 alpha, 1 beta, 1 beta' and 1 omega subunit. When a sigma factor is associated with the core the holoenzyme is formed, which can initiate transcription.

It catalyses the reaction RNA(n) + a ribonucleoside 5'-triphosphate = RNA(n+1) + diphosphate. Functionally, DNA-dependent RNA polymerase catalyzes the transcription of DNA into RNA using the four ribonucleoside triphosphates as substrates. The chain is DNA-directed RNA polymerase subunit alpha from Saccharopolyspora erythraea (strain ATCC 11635 / DSM 40517 / JCM 4748 / NBRC 13426 / NCIMB 8594 / NRRL 2338).